A 581-amino-acid polypeptide reads, in one-letter code: Activating signal cointegrator 1 (581 aa).

A2 is modified (N-acetylalanine). The segment at 100–121 is disordered; sequence DQLKRSRRKGRNKQEVPAFPEP. A C4-type zinc finger spans residues 167–219; sequence GRHPCDCLGQKHKLINNCLVCGRIVCEQEGSGPCLFCGSLVCTNEEQDILQRD. A mediates interaction with DDRGK1 region spans residues 200-300; it reads CLFCGSLVCT…ASDSNQWLSK (101 aa). Residue S276 is modified to Phosphoserine. Position 289 is a phosphotyrosine (Y289). The segment at 300–400 is mediates interaction with UFL1; the sequence is KVEREMLQKR…WVDNTGSTPQ (101 aa). Glycyl lysine isopeptide (Lys-Gly) (interchain with G-Cter in UFM1) cross-links involve residues K324 and K334. A compositionally biased stretch (polar residues) spans 390–406; the sequence is QWVDNTGSTPQKKTSLS. The disordered stretch occupies residues 390-410; that stretch reads QWVDNTGSTPQKKTSLSAGPR. Residues 437–531 form the ASCH domain; the sequence is LSMHQPWASL…FQEQFPDISQ (95 aa).

In terms of assembly, interacts with the thyroid hormone receptor/TR (via the ligand-binding domain); this interaction requires the presence of thyroid hormone. Interacts with the androgen receptor/AR; in an androgen, testosterone and dihydrotestosterone-dependent manner. Interacts with ESR1 (estrogen ligand-bound); competes with UFSP2. Interacts with UFSP2; competes with ligand-bound ESR1. Interacts with DDRGK1 and UFL1; the interaction with DDRGK1 is direct. Interacts with NCOA1. Interacts with EP300. Part of the ASC-1 complex, that contains TRIP4, ASCC1, ASCC2 and ASCC3. Identified in the RQT (ribosome quality control trigger) complex, that contains ASCC2, ASCC3 and TRIP4. Interacts with NEK6. Interacts with CSRP1. Interacts with ZCCHC4. Post-translationally, phosphorylated by NEK6. Polyufmylated by the UFM1-conjugating system composed of the enzymes UBA5, UFC1 and UFL1. Deufmylated by the protease UFSP2. Ufmylation of TRIP4 is promoted by ligand-bound nuclear receptors that compete with UFSP2 for interaction with TRIP4. Nuclear receptors-induced ufmylation promotes the recruitment of additional transcriptional coactivators like EP300 and NCOA1 and therefore the assembly of a coactivator complex facilitating nuclear receptor-mediated transcription. As to expression, ubiquitously expressed. Expressed in the spinal cord, brain, paraspinal ganglia, thyroid, and submandibular glands. Expressed at low level in all the muscles (at protein level) but with higher expression in axial than in limb muscles.

Its subcellular location is the nucleus. The protein resides in the cytoplasm. It is found in the cytosol. It localises to the cytoskeleton. The protein localises to the microtubule organizing center. Its subcellular location is the centrosome. Transcription coactivator which associates with nuclear receptors, transcriptional coactivators including EP300, CREBBP and NCOA1, and basal transcription factors like TBP and TFIIA to facilitate nuclear receptors-mediated transcription. May thereby play an important role in establishing distinct coactivator complexes under different cellular conditions. Plays a role in thyroid hormone receptor and estrogen receptor transactivation. Also involved in androgen receptor transactivation. Plays a pivotal role in the transactivation of NF-kappa-B, SRF and AP1. Acts as a mediator of transrepression between nuclear receptor and either AP1 or NF-kappa-B. May play a role in the development of neuromuscular junction. May play a role in late myogenic differentiation. Also functions as part of the RQC trigger (RQT) complex that activates the ribosome quality control (RQC) pathway, a pathway that degrades nascent peptide chains during problematic translation. This chain is Activating signal cointegrator 1, found in Mus musculus (Mouse).